The following is a 624-amino-acid chain: RQC trigger complex subunit CUE3 (624 aa).

A CUE domain is found at 316–359; the sequence is VNEEQLSALMELFPQFSKYQLSQTLLAYDNNIELVTNKIFEDPT. Disordered regions lie at residues 366–390, 435–469, and 546–624; these read REPAEEEVEPVSDGDNASFTEELSI, RDDTYDEADVNRSDPSKRIGLQEDEESYDTKDDSN, and SKTG…NNAI. Ser377 is subject to Phosphoserine. Basic and acidic residues-rich tracts occupy residues 443 to 455 and 568 to 589; these read DVNRSDPSKRIGL and EQAKQKKSENIKKHEPQSTEQK. The segment covering 590 to 617 has biased composition (basic residues); sequence KRQHAKNEKRKGARANHNRKKGHDKKLA.

As to quaternary structure, component of the RQT (ribosome quality control trigger) complex, composed of SLH1, CUE3, and RQT4. Interacts with ubiquitin; the interaction is direct. Interacts with SLH1. Interacts with RQT4. Interacts with HEL2. Associates with translating ribosomes.

The protein localises to the cytoplasm. In terms of biological role, involved in activation of the ribosome quality control (RQC) pathway, a pathway that degrades nascent peptide chains during problematic translation. Specifically recognizes and binds RPS20/uS10 ubiquitinated by HEL2, promoting recruitment of the RQT (ribosome quality control trigger) complex on stalled ribosomes, followed by disassembly of stalled ribosomes. The sequence is that of RQC trigger complex subunit CUE3 (CUE3) from Saccharomyces cerevisiae (strain ATCC 204508 / S288c) (Baker's yeast).